Consider the following 318-residue polypeptide: Leucine-rich repeat domain-containing protein YddK (318 aa).

LRR repeat units follow at residues 109–129 (NFTSINLDNNQFTHFDATNYD), 130–151 (RLVKLSLNSNALESINFPQGRN), 153–173 (SITHISMNNNALRNIDIDRLS), 174–194 (SVTYFSAAHNQLEFVQLESCE), 195–216 (WLQYLNLSHNQLTDIVAGNKNE), 217–237 (LLLLDLSHNKLTSLHNDLFPN), 238–258 (LNTLLINNNLLSEIKIFYSNF), 260–280 (NVQTLNAANNQLKYINLDFLT), and 284–305 (SIKSLRLDNNKITHIDTNNTSD).

The protein is Leucine-rich repeat domain-containing protein YddK (yddK) of Escherichia coli (strain K12).